A 123-amino-acid polypeptide reads, in one-letter code: Protein Wnt-3b (123 aa).

The O-palmitoleoyl serine; by PORCN moiety is linked to residue Ser-1. Cysteines 89 and 104 form a disulfide. A glycan (N-linked (GlcNAc...) asparagine) is linked at Asn-90.

This sequence belongs to the Wnt family. Post-translationally, palmitoleoylation is required for efficient binding to frizzled receptors. Depalmitoleoylation leads to Wnt signaling pathway inhibition.

The protein resides in the secreted. The protein localises to the extracellular space. It is found in the extracellular matrix. Its function is as follows. Ligand for members of the frizzled family of seven transmembrane receptors. Probable developmental protein. May be a signaling molecule which affects the development of discrete regions of tissues. Is likely to signal over only few cell diameters. The protein is Protein Wnt-3b (WNT-3B) of Plethodon jordani (Red-cheeked salamander).